We begin with the raw amino-acid sequence, 435 residues long: 3-phosphoshikimate 1-carboxyvinyltransferase (435 aa).

Residues K15, S16, and R20 each contribute to the 3-phosphoshikimate site. K15 contributes to the phosphoenolpyruvate binding site. Positions 96 and 124 each coordinate phosphoenolpyruvate. S169, Q171, T195, D319, and K346 together coordinate 3-phosphoshikimate. Q171 is a binding site for phosphoenolpyruvate. Residue D319 is the Proton acceptor of the active site. R350 and R394 together coordinate phosphoenolpyruvate.

The protein belongs to the EPSP synthase family. Monomer.

The protein resides in the cytoplasm. The catalysed reaction is 3-phosphoshikimate + phosphoenolpyruvate = 5-O-(1-carboxyvinyl)-3-phosphoshikimate + phosphate. It functions in the pathway metabolic intermediate biosynthesis; chorismate biosynthesis; chorismate from D-erythrose 4-phosphate and phosphoenolpyruvate: step 6/7. Its function is as follows. Catalyzes the transfer of the enolpyruvyl moiety of phosphoenolpyruvate (PEP) to the 5-hydroxyl of shikimate-3-phosphate (S3P) to produce enolpyruvyl shikimate-3-phosphate and inorganic phosphate. The chain is 3-phosphoshikimate 1-carboxyvinyltransferase from Chloroherpeton thalassium (strain ATCC 35110 / GB-78).